A 405-amino-acid chain; its full sequence is MADVKKVVLAYSGGLDTSVILKWLQDTYNCEVVTFTADLGQGEEVEPARAKAQAMGVKEIYIDDLREEFVRDFVFPMFRANTVYEGEYLLGTSIARPLIAKRLIEIANETGADAISHGATGKGNDQVRFELGAYALKPGVKVIAPWREWDLLSREKLMDYAEKHGIPIERHGKKKSPYSMDANLLHISYEGGVLEDTWTEHEEDMWRWSVSPENAPDQATYIELTYRNGDIVAIDGVEKSPATVLADLNRIGGANGIGRLDIVENRYVGMKSRGCYETPGGTIMLKAHRAIESITLDREVAHLKDELMPKYASLIYTGYWWSPERLMLQQMIDASQVNVNGVVRLKLYKGNVTVVGRKSDDSLFDANIATFEEDGGAYNQADAAGFIKLNALRMRIAANKGRSLL.

ATP-binding positions include 10–18 and Ala-37; that span reads AYSGGLDTS. L-citrulline-binding residues include Tyr-88 and Ser-93. An ATP-binding site is contributed by Gly-118. Residues Thr-120, Asn-124, and Asp-125 each contribute to the L-aspartate site. Asn-124 lines the L-citrulline pocket. Residues Arg-128, Ser-179, Ser-188, Glu-264, and Tyr-276 each contribute to the L-citrulline site.

It belongs to the argininosuccinate synthase family. Type 1 subfamily. In terms of assembly, homotetramer.

Its subcellular location is the cytoplasm. It catalyses the reaction L-citrulline + L-aspartate + ATP = 2-(N(omega)-L-arginino)succinate + AMP + diphosphate + H(+). It functions in the pathway amino-acid biosynthesis; L-arginine biosynthesis; L-arginine from L-ornithine and carbamoyl phosphate: step 2/3. The polypeptide is Argininosuccinate synthase (Pseudomonas entomophila (strain L48)).